We begin with the raw amino-acid sequence, 344 residues long: tRNA N6-adenosine threonylcarbamoyltransferase (344 aa).

Histidine 111 and histidine 115 together coordinate Fe cation. Substrate is bound by residues 134-138, aspartate 167, glycine 180, and asparagine 273; that span reads LVSGG. A Fe cation-binding site is contributed by aspartate 301.

Belongs to the KAE1 / TsaD family. The cofactor is Fe(2+).

Its subcellular location is the cytoplasm. It carries out the reaction L-threonylcarbamoyladenylate + adenosine(37) in tRNA = N(6)-L-threonylcarbamoyladenosine(37) in tRNA + AMP + H(+). Its function is as follows. Required for the formation of a threonylcarbamoyl group on adenosine at position 37 (t(6)A37) in tRNAs that read codons beginning with adenine. Is involved in the transfer of the threonylcarbamoyl moiety of threonylcarbamoyl-AMP (TC-AMP) to the N6 group of A37, together with TsaE and TsaB. TsaD likely plays a direct catalytic role in this reaction. In Cupriavidus necator (strain ATCC 17699 / DSM 428 / KCTC 22496 / NCIMB 10442 / H16 / Stanier 337) (Ralstonia eutropha), this protein is tRNA N6-adenosine threonylcarbamoyltransferase.